The following is a 297-amino-acid chain: uncharacterized protein (297 aa).

Positions Met1 to Asp44 are disordered. Positions Pro10–Pro23 are enriched in low complexity. Basic and acidic residues predominate over residues Leu26–Asp44.

This is an uncharacterized protein from Invertebrate iridescent virus 3 (IIV-3).